Here is a 199-residue protein sequence, read N- to C-terminus: Protein GrpE (199 aa).

Residues 1-27 (MSEQNTNHESPEQNVAHDNIEHSDSIL) form a disordered region. Over residues 18–27 (DNIEHSDSIL) the composition is skewed to basic and acidic residues.

This sequence belongs to the GrpE family. In terms of assembly, homodimer.

It is found in the cytoplasm. Its function is as follows. Participates actively in the response to hyperosmotic and heat shock by preventing the aggregation of stress-denatured proteins, in association with DnaK and GrpE. It is the nucleotide exchange factor for DnaK and may function as a thermosensor. Unfolded proteins bind initially to DnaJ; upon interaction with the DnaJ-bound protein, DnaK hydrolyzes its bound ATP, resulting in the formation of a stable complex. GrpE releases ADP from DnaK; ATP binding to DnaK triggers the release of the substrate protein, thus completing the reaction cycle. Several rounds of ATP-dependent interactions between DnaJ, DnaK and GrpE are required for fully efficient folding. This is Protein GrpE from Psychrobacter sp. (strain St1).